Here is a 460-residue protein sequence, read N- to C-terminus: MASRTLSGALALAAAATAVLAAPATVAHRSPPGTKDVTAVLFEWDYVSVAKECTSTLGPAGYGYVQVSPPAEHIQGSQWWTSYQPVSYKIAGRLGDRAAFRSMVNTCHAAGVKVVVDTVINHMSAGSGTGTGGSSYTKYDYPGLYSAPDFDDCTAEITDYQDRWNVQHCELVGLADLDTGEEYVRQTIAGYMNDLLSLGVDGFRIDAATHIPAEDLANIKSRLSNPNAYWKQEVIYGAGEPPKPGEYTGTGDVQEFRYAYDLKRVFTQEHLAYLKNYGEDWGYLSSTTAGVFVDNHDTERNGSTLNYKNDATYTLANVFMLAWPYGAPDINSGYEWSDPDARPPDGGHVDACWQNGWKCQHKWPEIASMVAFRNATRGEPVTDWWDDGADAIAFGRGSKGFVAINHESATVQRTYQTSLPAGTYCDVQSNTTVTVDSAGRFTAALGPDTALALHNGRTSC.

An N-terminal signal peptide occupies residues 1-21; sequence MASRTLSGALALAAAATAVLA. Positions 121, 167, and 176 each coordinate Ca(2+). Catalysis depends on aspartate 206, which acts as the Nucleophile. Histidine 210 is a Ca(2+) binding site. Glutamate 233 functions as the Proton donor in the catalytic mechanism.

The protein belongs to the glycosyl hydrolase 13 family. Monomer. Ca(2+) serves as cofactor.

The enzyme catalyses Endohydrolysis of (1-&gt;4)-alpha-D-glucosidic linkages in polysaccharides containing three or more (1-&gt;4)-alpha-linked D-glucose units.. The protein is Alpha-amylase (amy) of Streptomyces thermoviolaceus.